A 120-amino-acid chain; its full sequence is Cytochrome c oxidase subunit 5 (120 aa).

At S2 the chain carries Blocked amino end (Ser). C76, H84, C99, and C102 together coordinate Zn(2+).

This sequence belongs to the cytochrome c oxidase subunit 5B family. As to quaternary structure, component of the cytochrome c oxidase (complex IV, CIV), a multisubunit enzyme composed of a catalytic core of 3 subunits and several supernumerary subunits. The complex exists as a monomer or a dimer and forms supercomplexes (SCs) in the inner mitochondrial membrane with ubiquinol-cytochrome c oxidoreductase (cytochrome b-c1 complex, complex III, CIII). Slime mold cytochrome c oxidase consists of at least seven different polypeptides species, subunits I, II, III, IV, V, VI, and VIIe/s in order of MW.

The protein localises to the mitochondrion inner membrane. It functions in the pathway energy metabolism; oxidative phosphorylation. Functionally, component of the cytochrome c oxidase, the last enzyme in the mitochondrial electron transport chain which drives oxidative phosphorylation. The respiratory chain contains 3 multisubunit complexes succinate dehydrogenase (complex II, CII), ubiquinol-cytochrome c oxidoreductase (cytochrome b-c1 complex, complex III, CIII) and cytochrome c oxidase (complex IV, CIV), that cooperate to transfer electrons derived from NADH and succinate to molecular oxygen, creating an electrochemical gradient over the inner membrane that drives transmembrane transport and the ATP synthase. Cytochrome c oxidase is the component of the respiratory chain that catalyzes the reduction of oxygen to water. Electrons originating from reduced cytochrome c in the intermembrane space (IMS) are transferred via the dinuclear copper A center (CU(A)) of subunit 2 and heme A of subunit 1 to the active site in subunit 1, a binuclear center (BNC) formed by heme A3 and copper B (CU(B)). The BNC reduces molecular oxygen to 2 water molecules using 4 electrons from cytochrome c in the IMS and 4 protons from the mitochondrial matrix. The protein is Cytochrome c oxidase subunit 5 (cxeA) of Dictyostelium discoideum (Social amoeba).